The following is a 177-amino-acid chain: Parathyroid hormone-related protein (177 aa).

The N-terminal stretch at 1 to 24 is a signal peptide; the sequence is MLRRLVQQWSVLVFLLSYSVPSRG. A propeptide spanning residues 25–34 is cleaved from the precursor; sequence RSVEGLGRRL. An important for receptor binding region spans residues 57-68; the sequence is RFFLHHLIAEIH. Positions 74-177 are disordered; the sequence is ATSEVSPNSK…TSLEPSSRTH (104 aa). Positions 76-90 are enriched in polar residues; the sequence is SEVSPNSKPAPNTKN. A Nuclear localization signal motif is present at residues 108–129; it reads TNKVETYKEQPLKTPGKKKKGK. Residues 109–118 show a composition bias toward basic and acidic residues; sequence NKVETYKEQP. The segment covering 122–132 has biased composition (basic residues); that stretch reads PGKKKKGKPGK. Positions 161–177 are enriched in low complexity; the sequence is PHTSPTSTSLEPSSRTH.

This sequence belongs to the parathyroid hormone family. In terms of assembly, PTHrP interacts with PTH1R (via N-terminal extracellular domain). There are several secretory forms, including osteostatin, arising from endoproteolytic cleavage of the initial translation product. Each of these secretory forms is believed to have one or more of its own receptors that mediates the normal paracrine, autocrine and endocrine actions.

The protein localises to the secreted. It localises to the cytoplasm. The protein resides in the nucleus. Functionally, neuroendocrine peptide which is a critical regulator of cellular and organ growth, development, migration, differentiation and survival and of epithelial calcium ion transport. Acts by binding to its receptor, PTH1R, activating G protein-coupled receptor signaling. Regulates endochondral bone development and epithelial-mesenchymal interactions during the formation of the mammary glands and teeth. Required for skeletal homeostasis. Promotes mammary mesenchyme differentiation and bud outgrowth by modulating mesenchymal cell responsiveness to BMPs. Up-regulates BMPR1A expression in the mammary mesenchyme and this increases the sensitivity of these cells to BMPs and allows them to respond to BMP4 in a paracrine and/or autocrine fashion. BMP4 signaling in the mesenchyme, in turn, triggers epithelial outgrowth and augments MSX2 expression, which causes the mammary mesenchyme to inhibit hair follicle formation within the nipple sheath. Its function is as follows. Potent inhibitor of osteoclastic bone resorption. The protein is Parathyroid hormone-related protein (Pthlh) of Rattus norvegicus (Rat).